The primary structure comprises 323 residues: Probable cell division protein WhiA (323 aa).

The segment at residues 275-309 (TLKELGEMLTTGQVSKSGINHRLRKLDQIAERLRS) is a DNA-binding region (H-T-H motif).

This sequence belongs to the WhiA family.

Functionally, involved in cell division and chromosome segregation. This is Probable cell division protein WhiA from Listeria monocytogenes serotype 4b (strain CLIP80459).